The primary structure comprises 183 residues: Ribonuclease H (183 aa).

Positions 2-151 (SQARFIAFSD…VDQLAQAAAR (150 aa)) constitute an RNase H type-1 domain. Mg(2+) is bound by residues aspartate 11, glutamate 57, aspartate 79, and aspartate 143.

This sequence belongs to the RNase H family. In terms of assembly, monomer. Mg(2+) serves as cofactor.

The protein resides in the cytoplasm. It carries out the reaction Endonucleolytic cleavage to 5'-phosphomonoester.. Endonuclease that specifically degrades the RNA of RNA-DNA hybrids. The polypeptide is Ribonuclease H (Anaeromyxobacter sp. (strain K)).